The sequence spans 70 residues: MQHIEADIEQLQMKVAFQEDTIEELNKALIKQQKQLELLEFQLSHVINKVKEIDVPSGDSQEVEPPPPHY.

Belongs to the SlyX family.

This is Protein SlyX homolog from Pseudoalteromonas atlantica (strain T6c / ATCC BAA-1087).